We begin with the raw amino-acid sequence, 393 residues long: GDSL esterase/lipase At1g28600 (393 aa).

A signal peptide spans 1–22; it reads MASLDSLVIFLFSTLFVTIVSS. Ser-38 (nucleophile) is an active-site residue. N-linked (GlcNAc...) asparagine glycosylation is found at Asn-133 and Asn-317. Residues Asp-340 and His-343 contribute to the active site. Residue Asn-382 is glycosylated (N-linked (GlcNAc...) asparagine).

Belongs to the 'GDSL' lipolytic enzyme family.

Its subcellular location is the secreted. The sequence is that of GDSL esterase/lipase At1g28600 from Arabidopsis thaliana (Mouse-ear cress).